The sequence spans 467 residues: Hydroxyacid-oxoacid transhydrogenase, mitochondrial (467 aa).

Lysine 445 carries the post-translational modification N6-acetyllysine. Position 452 is a phosphoserine (serine 452).

Belongs to the iron-containing alcohol dehydrogenase family. Hydroxyacid-oxoacid transhydrogenase subfamily.

It is found in the mitochondrion. It carries out the reaction (S)-3-hydroxybutanoate + 2-oxoglutarate = (R)-2-hydroxyglutarate + acetoacetate. The catalysed reaction is 4-hydroxybutanoate + 2-oxoglutarate = (R)-2-hydroxyglutarate + succinate semialdehyde. Functionally, catalyzes the cofactor-independent reversible oxidation of gamma-hydroxybutyrate (GHB) to succinic semialdehyde (SSA) coupled to reduction of 2-ketoglutarate (2-KG) to D-2-hydroxyglutarate (D-2-HG). L-3-hydroxybutyrate (L-3-OHB) is also a substrate for HOT when using 2-KG as hydrogen acceptor, resulting in the formation of D-2-HG. In Pongo abelii (Sumatran orangutan), this protein is Hydroxyacid-oxoacid transhydrogenase, mitochondrial (ADHFE1).